Consider the following 320-residue polypeptide: 1-aminocyclopropane-1-carboxylate oxidase 3 (320 aa).

Residues 153-253 enclose the Fe2OG dioxygenase domain; it reads PNFGTKVSNY…RMSLASFYNP (101 aa). 3 residues coordinate Fe cation: histidine 177, aspartate 179, and histidine 234.

Belongs to the iron/ascorbate-dependent oxidoreductase family. It depends on Fe cation as a cofactor.

The enzyme catalyses 1-aminocyclopropane-1-carboxylate + L-ascorbate + O2 = ethene + L-dehydroascorbate + hydrogen cyanide + CO2 + 2 H2O. It participates in alkene biosynthesis; ethylene biosynthesis via S-adenosyl-L-methionine; ethylene from S-adenosyl-L-methionine: step 2/2. This chain is 1-aminocyclopropane-1-carboxylate oxidase 3 (ACO3), found in Petunia hybrida (Petunia).